Consider the following 323-residue polypeptide: tRNA dimethylallyltransferase (323 aa).

ATP is bound at residue 12–19; sequence GPTAAGKT. Position 14–19 (14–19) interacts with substrate; that stretch reads TAAGKT. Interaction with substrate tRNA regions lie at residues 37–40 and 161–165; these read DSAL and QRLSR.

This sequence belongs to the IPP transferase family. As to quaternary structure, monomer. Mg(2+) serves as cofactor.

The enzyme catalyses adenosine(37) in tRNA + dimethylallyl diphosphate = N(6)-dimethylallyladenosine(37) in tRNA + diphosphate. In terms of biological role, catalyzes the transfer of a dimethylallyl group onto the adenine at position 37 in tRNAs that read codons beginning with uridine, leading to the formation of N6-(dimethylallyl)adenosine (i(6)A). This is tRNA dimethylallyltransferase from Pseudomonas fluorescens (strain Pf0-1).